Reading from the N-terminus, the 527-residue chain is T-complex protein 1 subunit delta (527 aa).

It belongs to the TCP-1 chaperonin family. In terms of assembly, heterooligomeric complex of about 850 to 900 kDa that forms two stacked rings, 12 to 16 nm in diameter.

The protein resides in the cytoplasm. Molecular chaperone; assists the folding of proteins upon ATP hydrolysis. Known to play a role, in vitro, in the folding of actin and tubulin. The sequence is that of T-complex protein 1 subunit delta (CCT4) from Yarrowia lipolytica (strain CLIB 122 / E 150) (Yeast).